Consider the following 106-residue polypeptide: Putative double-stranded DNA mimic protein VP1949 (106 aa).

Belongs to the putative dsDNA mimic protein family.

May act as a double-stranded DNA (dsDNA) mimic. Probably regulates the activity of a dsDNA-binding protein. The chain is Putative double-stranded DNA mimic protein VP1949 from Vibrio parahaemolyticus serotype O3:K6 (strain RIMD 2210633).